The primary structure comprises 362 residues: MAQVFNFSSGPAMLPAEVLKLAQQELRDWHGLGTSVMEISHRGKEFIQVAEEAEQDFRDLLNIPSNYKVLFCHGGGRGQFAGVPLNLLGDKTTADYVDAGYWAASAIKEAKKYCAPQIIDAKITVDGKRAVKPMREWQLSDNAAYLHYCPNETIDGIAIDETPDFGPEVVVTADFSSTILSAPLDVSRYGVIYAGAQKNIGPAGLTLVIVREDLLGKAHESCPSILDYTVLNDNDSMFNTPPTFAWYLSGLVFKWLKAQGGVAAMHKINQQKAELLYGVIDNSDFYRNDVAQANRSRMNVPFQLADNALDKVFLEESFAAGLHALKGHRVVGGMRASIYNAMPIEGVKALTDFMIDFERRHG.

Residues serine 9 and arginine 42 each coordinate L-glutamate. Pyridoxal 5'-phosphate is bound by residues 76-77 (GR), tryptophan 102, threonine 153, aspartate 174, and glutamine 197. Position 198 is an N6-(pyridoxal phosphate)lysine (lysine 198). 239-240 (NT) contacts pyridoxal 5'-phosphate.

It belongs to the class-V pyridoxal-phosphate-dependent aminotransferase family. SerC subfamily. In terms of assembly, homodimer. The cofactor is pyridoxal 5'-phosphate.

It is found in the cytoplasm. It carries out the reaction O-phospho-L-serine + 2-oxoglutarate = 3-phosphooxypyruvate + L-glutamate. The enzyme catalyses 4-(phosphooxy)-L-threonine + 2-oxoglutarate = (R)-3-hydroxy-2-oxo-4-phosphooxybutanoate + L-glutamate. It functions in the pathway amino-acid biosynthesis; L-serine biosynthesis; L-serine from 3-phospho-D-glycerate: step 2/3. Its pathway is cofactor biosynthesis; pyridoxine 5'-phosphate biosynthesis; pyridoxine 5'-phosphate from D-erythrose 4-phosphate: step 3/5. Functionally, catalyzes the reversible conversion of 3-phosphohydroxypyruvate to phosphoserine and of 3-hydroxy-2-oxo-4-phosphonooxybutanoate to phosphohydroxythreonine. This is Phosphoserine aminotransferase from Salmonella agona (strain SL483).